The chain runs to 732 residues: Coagulation factor XIII A chain (732 aa).

The segment at 1–27 (MSETSRTAFGGRRAVPPNNSNAAEDDL) is disordered. Serine 2 bears the N-acetylserine mark. Positions 2 to 38 (SETSRTAFGGRRAVPPNNSNAAEDDLPTVELQGVVPR) are cleaved as a propeptide — activation peptide. Residues cysteine 315, histidine 374, and aspartate 397 contribute to the active site. 4 residues coordinate Ca(2+): asparagine 437, aspartate 439, glutamate 486, and glutamate 491. Asparagine 614 carries an N-linked (GlcNAc...) asparagine glycan.

This sequence belongs to the transglutaminase superfamily. Transglutaminase family. In terms of assembly, tetramer of two A chains (F13A1) and two B (F13B) chains. Ca(2+) is required as a cofactor. The activation peptide is released by thrombin.

The protein localises to the cytoplasm. Its subcellular location is the secreted. It catalyses the reaction L-glutaminyl-[protein] + L-lysyl-[protein] = [protein]-L-lysyl-N(6)-5-L-glutamyl-[protein] + NH4(+). Functionally, factor XIII is activated by thrombin and calcium ion to a transglutaminase that catalyzes the formation of gamma-glutamyl-epsilon-lysine cross-links between fibrin chains, thus stabilizing the fibrin clot. Also cross-link alpha-2-plasmin inhibitor, or fibronectin, to the alpha chains of fibrin. The sequence is that of Coagulation factor XIII A chain (F13A1) from Homo sapiens (Human).